The primary structure comprises 509 residues: tRNA-2-methylthio-N(6)-dimethylallyladenosine synthase (509 aa).

A compositionally biased stretch (polar residues) spans 1-15 (MNEQQRLASQQVNSS). Residues 1–26 (MNEQQRLASQQVNSSTKKEEKDYSKY) form a disordered region. Residues 16-25 (TKKEEKDYSK) are compositionally biased toward basic and acidic residues. Positions 66–184 (RKFYIRTYGC…LPYILKDAMF (119 aa)) constitute an MTTase N-terminal domain. Residues Cys-75, Cys-111, Cys-145, Cys-221, Cys-225, and Cys-228 each coordinate [4Fe-4S] cluster. The Radical SAM core domain occupies 207–437 (RRGDIKAWVN…NALVNKLAIE (231 aa)). Residues 440 to 503 (DRYKGQIVEV…TWSLNGELVE (64 aa)) enclose the TRAM domain.

This sequence belongs to the methylthiotransferase family. MiaB subfamily. In terms of assembly, monomer. Requires [4Fe-4S] cluster as cofactor.

The protein resides in the cytoplasm. It catalyses the reaction N(6)-dimethylallyladenosine(37) in tRNA + (sulfur carrier)-SH + AH2 + 2 S-adenosyl-L-methionine = 2-methylsulfanyl-N(6)-dimethylallyladenosine(37) in tRNA + (sulfur carrier)-H + 5'-deoxyadenosine + L-methionine + A + S-adenosyl-L-homocysteine + 2 H(+). Its function is as follows. Catalyzes the methylthiolation of N6-(dimethylallyl)adenosine (i(6)A), leading to the formation of 2-methylthio-N6-(dimethylallyl)adenosine (ms(2)i(6)A) at position 37 in tRNAs that read codons beginning with uridine. The protein is tRNA-2-methylthio-N(6)-dimethylallyladenosine synthase of Bacillus thuringiensis (strain Al Hakam).